The chain runs to 769 residues: Serine/threonine-protein kinase PLK4 (769 aa).

Residues 14–267 form the Protein kinase domain; that stretch reads YEVQHLLGKG…LEAVLCHPFM (254 aa). ATP contacts are provided by residues 20 to 28 and Lys43; that span reads LGKGGFATV. Asp138 functions as the Proton acceptor in the catalytic mechanism. In terms of domain architecture, Cryptic POLO box 1 (CPB1) spans 381–498; sequence EDRISVPPLN…ARFVGLVKSK (118 aa). The Cryptic POLO box 2 (CPB2) domain occupies 499 to 602; sequence TPKVTYFSTL…GRRPITDVQP (104 aa). The 80-residue stretch at 660-739 folds into the POLO box domain; that stretch reads PIKRINVPEI…IPNIQLKLKT (80 aa).

It belongs to the protein kinase superfamily. Ser/Thr protein kinase family. CDC5/Polo subfamily. Homodimer. Interacts with Alms1a. Post-translationally, ubiquitinated by the SCF-slmb ubiquitin ligase complex; leading to its degradation by the proteasome during interphase and regulating centriole number and ensuring the block to centriole reduplication. As to expression, expressed in testis (at protein level).

It localises to the cytoplasm. It is found in the cytoskeleton. The protein localises to the microtubule organizing center. Its subcellular location is the centrosome. The protein resides in the centriole. It catalyses the reaction L-seryl-[protein] + ATP = O-phospho-L-seryl-[protein] + ADP + H(+). It carries out the reaction L-threonyl-[protein] + ATP = O-phospho-L-threonyl-[protein] + ADP + H(+). Functionally, serine/threonine-protein kinase that plays a central role in centriole duplication. Able to trigger procentriole formation on the surface of the mother centriole cylinder, using mother centriole as a platform, leading to the recruitment of centriole biogenesis proteins such as Sas-6. When overexpressed, it is able to induce centrosome amplification through the simultaneous generation of multiple procentrioles adjoining each parental centriole during S phase. Centrosome amplification following overexpression can initiate tumorigenesis, highlighting the importance of centrosome regulation in cancers. This chain is Serine/threonine-protein kinase PLK4 (SAK), found in Drosophila melanogaster (Fruit fly).